The chain runs to 582 residues: MSLHSDESNWQTFKRLWTYIRLYKAGLVVSTIALVINAAADTYMISLLKPLLDEGFGNAESNFLRILPFMILGLMFVRGLSGFASSYCLSWVSGNVVMQMRRRLFNHFMHMPVRFFDQESTGGLLSRITYDSEQVAGATSRALVSIVREGASIIGLLTLMFWNSWQLSLVLIVVAPVVAFAISFVSKRFRKISRNMQTAMGHVTSSAEQMLKGHKVVLSYGGQEVERKRFDKVSNSMRQQTMKLVSAQSIADPVIQMIASLALFAVLFLASVDSIRAELTPGTFTVVFSAMFGLMRPLKALTSVTSEFQRGMAACQTLFGLMDLETERDNGKYEAERVNGEVDVKDVTFTYQGKEKPALSHVSFSIPQGKTVALVGRSGSGKSTIANLFTRFYDVDSGSICLDGHDVRDYKLTNLRRHFALVSQNVHLFNDTIANNIAYAAEGEYTREQIEQAARQAHAMEFIENMPQGLDTVIGENGTSLSGGQRQRVAIARALLRDAPVLILDEATSALDTESERAIQAALDELQKNKTVLVIAHRLSTIEQADEILVVDEGEIIERGRHADLLAQDGAYAQLHRIQFGE.

A run of 6 helical transmembrane segments spans residues 27-48, 63-85, 144-168, 170-188, 244-266, and 283-302; these read LVVS…ISLL, FLRI…GFAS, VSIV…WQLS, VLIV…VSKR, LVSA…LFAV, and TFTV…KALT. Residues 28–310 enclose the ABC transmembrane type-1 domain; the sequence is VVSTIALVIN…LTSVTSEFQR (283 aa). Residues 342 to 578 enclose the ABC transporter domain; it reads VDVKDVTFTY…DGAYAQLHRI (237 aa). Residue 376-383 coordinates ATP; it reads GRSGSGKS.

The protein belongs to the ABC transporter superfamily. Lipid exporter (TC 3.A.1.106) family. As to quaternary structure, homodimer.

The protein localises to the cell inner membrane. The catalysed reaction is ATP + H2O + lipid A-core oligosaccharideSide 1 = ADP + phosphate + lipid A-core oligosaccharideSide 2.. Its function is as follows. Involved in lipopolysaccharide (LPS) biosynthesis. Translocates lipid A-core from the inner to the outer leaflet of the inner membrane. Transmembrane domains (TMD) form a pore in the inner membrane and the ATP-binding domain (NBD) is responsible for energy generation. Shows ATPase activity. In Vibrio cholerae serotype O1 (strain ATCC 39315 / El Tor Inaba N16961), this protein is ATP-dependent lipid A-core flippase.